Reading from the N-terminus, the 246-residue chain is MSVPNEPDSSLAMHSWNLTPQQAIEVQKQLAVQTVRTGNPEGVQRVAGVDVSFNPREPKALVHAVVVVLSYPGLEVVDRQAVSAAVDFPYIPGLLSFREAPPILAAIGQLSQKPDLVIVDGHGYAHPRRLGIASHLGLFLDLPTIGCAKSILVGRADGDLAEAAGSLTDLLWRGEVVGRAVRTRSRVQPVYVSPGHRLGLDSAVEWVLRCCRGYRLPEPTRQAHNYSNLVRKARQPISLNGLSGAK.

Mg(2+)-binding residues include aspartate 50 and aspartate 120.

The protein belongs to the endonuclease V family. It depends on Mg(2+) as a cofactor.

It localises to the cytoplasm. It catalyses the reaction Endonucleolytic cleavage at apurinic or apyrimidinic sites to products with a 5'-phosphate.. In terms of biological role, DNA repair enzyme involved in the repair of deaminated bases. Selectively cleaves double-stranded DNA at the second phosphodiester bond 3' to a deoxyinosine leaving behind the intact lesion on the nicked DNA. The chain is Endonuclease V from Gloeobacter violaceus (strain ATCC 29082 / PCC 7421).